Here is a 256-residue protein sequence, read N- to C-terminus: Thiazole synthase (256 aa).

The active-site Schiff-base intermediate with DXP is lysine 96. 1-deoxy-D-xylulose 5-phosphate-binding positions include glycine 157, 183-184 (AG), and 205-206 (NT).

The protein belongs to the ThiG family. Homotetramer. Forms heterodimers with either ThiH or ThiS.

Its subcellular location is the cytoplasm. It catalyses the reaction [ThiS sulfur-carrier protein]-C-terminal-Gly-aminoethanethioate + 2-iminoacetate + 1-deoxy-D-xylulose 5-phosphate = [ThiS sulfur-carrier protein]-C-terminal Gly-Gly + 2-[(2R,5Z)-2-carboxy-4-methylthiazol-5(2H)-ylidene]ethyl phosphate + 2 H2O + H(+). It participates in cofactor biosynthesis; thiamine diphosphate biosynthesis. Its function is as follows. Catalyzes the rearrangement of 1-deoxy-D-xylulose 5-phosphate (DXP) to produce the thiazole phosphate moiety of thiamine. Sulfur is provided by the thiocarboxylate moiety of the carrier protein ThiS. In vitro, sulfur can be provided by H(2)S. This is Thiazole synthase from Clostridioides difficile (strain 630) (Peptoclostridium difficile).